The primary structure comprises 387 residues: Phosphoglycerate kinase (387 aa).

Substrate contacts are provided by residues 21-23 (DLN), Arg-36, 59-62 (HLGR), Arg-113, and Arg-146. Residues Lys-197, Glu-314, and 340-343 (GGDT) contribute to the ATP site.

Belongs to the phosphoglycerate kinase family. As to quaternary structure, monomer.

Its subcellular location is the cytoplasm. The catalysed reaction is (2R)-3-phosphoglycerate + ATP = (2R)-3-phospho-glyceroyl phosphate + ADP. The protein operates within carbohydrate degradation; glycolysis; pyruvate from D-glyceraldehyde 3-phosphate: step 2/5. This Yersinia pestis bv. Antiqua (strain Antiqua) protein is Phosphoglycerate kinase.